A 515-amino-acid polypeptide reads, in one-letter code: C-glycoside 3-oxidase (515 aa).

Position 41 (Glu41) interacts with FAD. Over residues 62 to 82 (ERAHAQRRSEGPHAREDDDRV) the composition is skewed to basic and acidic residues. A disordered region spans residues 62–90 (ERAHAQRRSEGPHAREDDDRVGGIVKSAQ). Residues Ser118, Asn120, Met124, Thr129, Ala131, and Val237 each contribute to the FAD site. The active-site Proton acceptor is His444. Positions 478 and 490 each coordinate FAD.

It belongs to the GMC oxidoreductase family. As to quaternary structure, monomer. Requires FAD as cofactor.

It carries out the reaction isoorientin + O2 = 3''-dehydroisoorientin + H2O2. The enzyme catalyses mangiferin + O2 = 3'-dehydromangiferin + H2O2. In terms of biological role, FAD-dependent C-glycoside-metabolizing enzyme that participates in the degradation of certain C-glycosides by catalyzing the oxidation of the hydroxyl group at the C3 position of the sugar moiety. Shows oxidase activity toward C-glycosides such as isoorientin and mangiferin but cannot use carminic acid, puerarin, orientin or aloesin. Shows weak activity (100 to 1000-fold lower) with O-glycosides. Probably plays a crucial role in the metabolism of C-glycosides in nature. The protein is C-glycoside 3-oxidase of Microbacterium trichothecenolyticum (Aureobacterium trichothecenolyticum).